Reading from the N-terminus, the 152-residue chain is Anaerobic nitrite reductase SYMA (152 aa).

The Globin domain occupies 2–151 (ALTERQEALL…LVATIKAEMK (150 aa)). The Homodimerization signature appears at 35-39 (EAAPE). The heme b site is built by serine 45, lysine 59, histidine 63, arginine 93, and histidine 98. Positions 105-117 (DPHFEVMKGALLG) match the Homodimerization motif.

The protein belongs to the plant globin family. Homodimer. Heme b is required as a cofactor. As to expression, root nodules.

The protein localises to the cytoplasm. Its subcellular location is the nucleus. The catalysed reaction is Fe(III)-heme b-[protein] + nitric oxide + H2O = Fe(II)-heme b-[protein] + nitrite + 2 H(+). Its function is as follows. Phytoglobin that reduces nitrite to nitric oxide (NO) under anoxic conditions (e.g. during flooding or in waterlogged soil) and upon root nodulation. Required for general plant development and during nodulation, especially for the onset of symbiosis. Monitors nitric oxide (NO) levels during early phase of the nitrogen-fixing symbiosis and buffers oxygen in functioning nodules. May not function as an oxygen storage or transport protein. Has an unusually high affinity for O(2) through a hexacoordinate heme iron because of a very low dissociation constant. This is Anaerobic nitrite reductase SYMA from Casuarina glauca (Swamp oak).